Reading from the N-terminus, the 295-residue chain is Ankyrin repeat and SOCS box protein 17 (295 aa).

An ANK repeat occupies 146 to 176; it reads SGITPLFYVAQTRQSNIFKILLQYGILEREK. Residues 232–295 form the SOCS box domain; sequence LGRHPIISNW…RLQNYLNLEI (64 aa).

Belongs to the ankyrin SOCS box (ASB) family. Specifically expressed in testis. Not detected in other tissues tested.

Its pathway is protein modification; protein ubiquitination. In terms of biological role, may be a substrate-recognition component of a SCF-like ECS (Elongin-Cullin-SOCS-box protein) E3 ubiquitin-protein ligase complex which mediates the ubiquitination and subsequent proteasomal degradation of target proteins. This chain is Ankyrin repeat and SOCS box protein 17 (ASB17), found in Homo sapiens (Human).